The chain runs to 136 residues: Large ribosomal subunit protein eL27B (136 aa).

The protein belongs to the eukaryotic ribosomal protein eL27 family. Component of the large ribosomal subunit (LSU). Mature yeast ribosomes consist of a small (40S) and a large (60S) subunit. The 40S small subunit contains 1 molecule of ribosomal RNA (18S rRNA) and 33 different proteins (encoded by 57 genes). The large 60S subunit contains 3 rRNA molecules (25S, 5.8S and 5S rRNA) and 46 different proteins (encoded by 81 genes).

The protein resides in the cytoplasm. Component of the ribosome, a large ribonucleoprotein complex responsible for the synthesis of proteins in the cell. The small ribosomal subunit (SSU) binds messenger RNAs (mRNAs) and translates the encoded message by selecting cognate aminoacyl-transfer RNA (tRNA) molecules. The large subunit (LSU) contains the ribosomal catalytic site termed the peptidyl transferase center (PTC), which catalyzes the formation of peptide bonds, thereby polymerizing the amino acids delivered by tRNAs into a polypeptide chain. The nascent polypeptides leave the ribosome through a tunnel in the LSU and interact with protein factors that function in enzymatic processing, targeting, and the membrane insertion of nascent chains at the exit of the ribosomal tunnel. The polypeptide is Large ribosomal subunit protein eL27B (Saccharomyces cerevisiae (strain ATCC 204508 / S288c) (Baker's yeast)).